The following is a 337-amino-acid chain: tRNA N(3)-cytidine methyltransferase METTL2 (337 aa).

S-adenosyl-L-methionine contacts are provided by Trp66, Tyr70, Gly140, Asp165, Asp191, and Ile212.

The protein belongs to the methyltransferase superfamily. METL family. In terms of assembly, monomer.

It is found in the cytoplasm. The enzyme catalyses cytidine(32) in tRNA(Thr) + S-adenosyl-L-methionine = N(3)-methylcytidine(32) in tRNA(Thr) + S-adenosyl-L-homocysteine + H(+). The catalysed reaction is cytidine(32) in tRNA(Arg)(CCU) + S-adenosyl-L-methionine = N(3)-methylcytidine(32) in tRNA(Arg)(CCU) + S-adenosyl-L-homocysteine + H(+). Its function is as follows. S-adenosyl-L-methionine-dependent methyltransferase that mediates N(3)-methylcytidine modification of residue 32 of the tRNA anticodon loop of tRNA(Thr)(UGU) and tRNA(Arg)(CCU). N(3)-methylcytidine methylation by mettl2 requires the N6-threonylcarbamoylation of tRNA (t6A37) by the EKC/KEOPS complex as prerequisite. The chain is tRNA N(3)-cytidine methyltransferase METTL2 (mettl2) from Xenopus tropicalis (Western clawed frog).